We begin with the raw amino-acid sequence, 353 residues long: Probable arabinan endo-1,5-alpha-L-arabinosidase B (353 aa).

The first 16 residues, 1-16, serve as a signal peptide directing secretion; the sequence is MVLVATLFSLFTVSLC. Asp-39 acts as the Proton acceptor in catalysis. Asn-194 carries N-linked (GlcNAc...) asparagine glycosylation. The tract at residues 202–227 is disordered; it reads HLAKHPKTERVNSQDQNPDPLCRDSS. Glu-233 (proton donor) is an active-site residue.

This sequence belongs to the glycosyl hydrolase 43 family.

The protein resides in the secreted. The catalysed reaction is Endohydrolysis of (1-&gt;5)-alpha-arabinofuranosidic linkages in (1-&gt;5)-arabinans.. The protein operates within glycan metabolism; L-arabinan degradation. Functionally, endo-1,5-alpha-L-arabinanase involved in degradation of pectin. Its preferred substrate is linear 1,5-alpha-L-arabinan. In Aspergillus oryzae (strain ATCC 42149 / RIB 40) (Yellow koji mold), this protein is Probable arabinan endo-1,5-alpha-L-arabinosidase B (abnB).